We begin with the raw amino-acid sequence, 888 residues long: MGGCVSVSISCDQLTKNVCSCLNRNGDYIHGLEENLTALQRALEQIEQRREDLLRKILSEERRGLQRLSVVQGWVSKVEAIVPRVNELVRMRSVQVQRLCLCGFCSKNLVSSYRYGKRVMKMIEEVEVLRYQGDFAVVAERVDAARVEERPTRPMVAMDPMLESAWNRLMEDEIGILGLHGMGGVGKTTLLSHINNRFSRVGGEFDIVIWIVVSKELQIQRIQDEIWEKLRSDNEKWKQKTEDIKASNIYNVLKHKRFVLLLDDIWSKVDLTEVGVPFPSRENGCKIVFTTRLKEICGRMGVDSDMEVRCLAPDDAWDLFTKKVGEITLGSHPEIPTVARTVAKKCRGLPLALNVIGETMAYKRTVQEWRSAIDVLTSSAAEFSGMEDEILPILKYSYDNLKSEQLKLCFQYCALFPEDHNIEKNDLVDYWIGEGFIDRNKGKAENQGYEIIGILVRSCLLMEENQETVKMHDVVREMALWIASDFGKQKENFIVQAGLQSRNIPEIEKWKVARRVSLMFNNIESIRDAPESPQLITLLLRKNFLGHISSSFFRLMPMLVVLDLSMNRDLRHLPNEISECVSLQYLSLSRTRIRIWPAGLVELRKLLYLNLEYTRMVESICGISGLTSLKVLRLFVSGFPEDPCVLNELQLLENLQTLTITLGLASILEQFLSNQRLASCTRALRIENLNPQSSVISFVATMDSLQELHFADSDIWEIKVKRNETVLPLHIPTTTTFFPNLSQVSLEFCTRLRDLTWLIFAPNLTVLRVISASDLKEVINKEKAEQQNLIPFQELKELRLENVQMLKHIHRGPLPFPCLQKILVNGCSELRKLPLNFTSVPRGDLVIEAHKKWIEILEWEDEATKARFLPTLKAFPENIDADGYEISF.

The stretch at 22-66 (LNRNGDYIHGLEENLTALQRALEQIEQRREDLLRKILSEERRGLQ) forms a coiled coil. Residues 139 to 442 (AERVDAARVE…GEGFIDRNKG (304 aa)) form the NB-ARC domain. 181–188 (GMGGVGKT) serves as a coordination point for ATP. LRR repeat units lie at residues 512-533 (VARR…PESP), 534-555 (QLIT…FFRL), 558-580 (MLVV…ISEC), 582-604 (SLQY…VELR), and 605-627 (KLLY…SGLT).

This sequence belongs to the disease resistance NB-LRR family.

Functionally, probable disease resistance protein. The sequence is that of Probable disease resistance protein At5g63020 from Arabidopsis thaliana (Mouse-ear cress).